A 233-amino-acid chain; its full sequence is Phosphatidylserine decarboxylase proenzyme (233 aa).

Ser190 functions as the Schiff-base intermediate with substrate; via pyruvic acid in the catalytic mechanism. The residue at position 190 (Ser190) is a Pyruvic acid (Ser); by autocatalysis.

The protein belongs to the phosphatidylserine decarboxylase family. PSD-A subfamily. In terms of assembly, heterodimer of a large membrane-associated beta subunit and a small pyruvoyl-containing alpha subunit. Pyruvate is required as a cofactor. Is synthesized initially as an inactive proenzyme. Formation of the active enzyme involves a self-maturation process in which the active site pyruvoyl group is generated from an internal serine residue via an autocatalytic post-translational modification. Two non-identical subunits are generated from the proenzyme in this reaction, and the pyruvate is formed at the N-terminus of the alpha chain, which is derived from the carboxyl end of the proenzyme. The post-translation cleavage follows an unusual pathway, termed non-hydrolytic serinolysis, in which the side chain hydroxyl group of the serine supplies its oxygen atom to form the C-terminus of the beta chain, while the remainder of the serine residue undergoes an oxidative deamination to produce ammonia and the pyruvoyl prosthetic group on the alpha chain.

It is found in the cell membrane. It catalyses the reaction a 1,2-diacyl-sn-glycero-3-phospho-L-serine + H(+) = a 1,2-diacyl-sn-glycero-3-phosphoethanolamine + CO2. Its pathway is phospholipid metabolism; phosphatidylethanolamine biosynthesis; phosphatidylethanolamine from CDP-diacylglycerol: step 2/2. Catalyzes the formation of phosphatidylethanolamine (PtdEtn) from phosphatidylserine (PtdSer). The sequence is that of Phosphatidylserine decarboxylase proenzyme from Azorhizobium caulinodans (strain ATCC 43989 / DSM 5975 / JCM 20966 / LMG 6465 / NBRC 14845 / NCIMB 13405 / ORS 571).